Reading from the N-terminus, the 340-residue chain is Lipoate--protein ligase 2 (340 aa).

One can recognise a BPL/LPL catalytic domain in the interval 31–222 (FLDEDILFPY…QILGIDDIKE (192 aa)). Residues Arg73, 78–81 (GAVY), Lys136, and Ala140 each bind ATP. Residue Lys136 participates in (R)-lipoate binding. Positions 293–321 (QGDIKDVEEALQGTKMTREDLMHQLKQLD) form a coiled coil.

This sequence belongs to the LplA family.

The catalysed reaction is L-lysyl-[lipoyl-carrier protein] + (R)-lipoate + ATP = N(6)-[(R)-lipoyl]-L-lysyl-[lipoyl-carrier protein] + AMP + diphosphate + H(+). It functions in the pathway protein modification; protein lipoylation via exogenous pathway; protein N(6)-(lipoyl)lysine from lipoate: step 1/2. Its pathway is protein modification; protein lipoylation via exogenous pathway; protein N(6)-(lipoyl)lysine from lipoate: step 2/2. Its function is as follows. Catalyzes specifically the lipoylation of GcvH-L (SAV0324), likely via the ATP-dependent activation of lipoate to lipoyl-AMP and the transfer of the activated lipoyl onto the lipoyl domain of the target protein. Can also utilize lipoamide as substrate for GcvH-L modification. This chain is Lipoate--protein ligase 2, found in Staphylococcus aureus (strain Mu50 / ATCC 700699).